Consider the following 463-residue polypeptide: Kynureninase 2 (463 aa).

Residues leucine 134, threonine 135, 162–165, aspartate 247, histidine 250, and tyrosine 272 contribute to the pyridoxal 5'-phosphate site; that span reads FPSD. At lysine 273 the chain carries N6-(pyridoxal phosphate)lysine. Pyridoxal 5'-phosphate-binding residues include tryptophan 312 and asparagine 340.

This sequence belongs to the kynureninase family. Homodimer. Pyridoxal 5'-phosphate is required as a cofactor.

The protein resides in the cytoplasm. The catalysed reaction is L-kynurenine + H2O = anthranilate + L-alanine + H(+). It catalyses the reaction 3-hydroxy-L-kynurenine + H2O = 3-hydroxyanthranilate + L-alanine + H(+). It participates in amino-acid degradation; L-kynurenine degradation; L-alanine and anthranilate from L-kynurenine: step 1/1. The protein operates within cofactor biosynthesis; NAD(+) biosynthesis; quinolinate from L-kynurenine: step 2/3. In terms of biological role, catalyzes the cleavage of L-kynurenine (L-Kyn) and L-3-hydroxykynurenine (L-3OHKyn) into anthranilic acid (AA) and 3-hydroxyanthranilic acid (3-OHAA), respectively. The protein is Kynureninase 2 (bna5-2) of Aspergillus terreus (strain NIH 2624 / FGSC A1156).